The primary structure comprises 387 residues: NAD(P)H oxidoreductase RTN4IP1, mitochondrial (387 aa).

Residues 1–27 (MLMCRRWLVCSLRCHYRSFSFSAARRT) constitute a mitochondrion transit peptide. The region spanning 38 to 379 (GKNDVLRFTK…QGHARGKTVV (342 aa)) is the Enoyl reductase (ER) domain. The NADPH site is built by S200, G202, V203, S223, Y241, L286, G327, F329, H372, A373, and R374.

The protein belongs to the zinc-containing alcohol dehydrogenase family. Quinone oxidoreductase subfamily.

The protein resides in the mitochondrion matrix. It localises to the mitochondrion outer membrane. It catalyses the reaction a 3-demethylubiquinone + NADH + 2 H(+) = a 3-demethylubiquinol + NAD(+). The enzyme catalyses a 3-demethylubiquinone + NADPH + 2 H(+) = a 3-demethylubiquinol + NADP(+). The catalysed reaction is 3-demethylubiquinone-10 + NADH + 2 H(+) = 3-demethylubiquinol-10 + NAD(+). It carries out the reaction 3-demethylubiquinone-10 + NADPH + 2 H(+) = 3-demethylubiquinol-10 + NADP(+). Its pathway is cofactor biosynthesis; ubiquinone biosynthesis. NAD(P)H oxidoreductase involved in the ubiquinone biosynthetic pathway. Required for the O-methyltransferase activity of COQ3. Able to catalyze the oxidoreduction of 3-demethylubiquinone into 3-demethylubiquinol in vitro. However, it is unclear if 3-demethylubiquinone constitutes a substrate in vivo. May also play a role in the regulation of retinal ganglion cell (RGC) neurite outgrowth, and hence in the development of the inner retina and optic nerve. The sequence is that of NAD(P)H oxidoreductase RTN4IP1, mitochondrial (rtn4ip1) from Danio rerio (Zebrafish).